A 402-amino-acid chain; its full sequence is MQKLTILGATGSIGASTLKVIEQNPDKFSVVALAADSNVEKMQQLCQRWQPEFAVMANKEAALRLKMALAVLAPNTQVLGGQEALCYVATLEQVDSVMAAIVGAAGLVPTMAAVKAGKRILLANKEALVMSGQLFIDEVEKSGAQLLPVDSEHNAIFQCLPQAVQGNLGRCDLASQGVSHILLTGSGGPFRYTDVAELEAVTPEQAIAHPNWSMGPKISVDSATMMNKGLEYIEAKWLFNANRDQLKVIIHPQSVIHSMVQYLDGSVLAQMGEPDMATPIALTLSYPERVKAGVKPLDFTQVGELTFLQPDFERYPCLALAIEACYLGQHATTTLNAANEVAVAAFLARQIKFTDIARVNDSVLNQVCKQSLASGLDSLESLLELDRMARTLADEVVRERAQ.

6 residues coordinate NADPH: Thr-10, Gly-11, Ser-12, Ile-13, Asn-38, and Asn-124. Lys-125 lines the 1-deoxy-D-xylulose 5-phosphate pocket. Glu-126 is an NADPH binding site. Asp-150 is a Mn(2+) binding site. 1-deoxy-D-xylulose 5-phosphate is bound by residues Ser-151, Glu-152, Ser-186, and His-209. A Mn(2+)-binding site is contributed by Glu-152. Gly-215 contacts NADPH. The 1-deoxy-D-xylulose 5-phosphate site is built by Ser-222, Asn-227, Lys-228, and Glu-231. Position 231 (Glu-231) interacts with Mn(2+).

The protein belongs to the DXR family. The cofactor is Mg(2+). Mn(2+) serves as cofactor.

It catalyses the reaction 2-C-methyl-D-erythritol 4-phosphate + NADP(+) = 1-deoxy-D-xylulose 5-phosphate + NADPH + H(+). Its pathway is isoprenoid biosynthesis; isopentenyl diphosphate biosynthesis via DXP pathway; isopentenyl diphosphate from 1-deoxy-D-xylulose 5-phosphate: step 1/6. Its function is as follows. Catalyzes the NADPH-dependent rearrangement and reduction of 1-deoxy-D-xylulose-5-phosphate (DXP) to 2-C-methyl-D-erythritol 4-phosphate (MEP). The sequence is that of 1-deoxy-D-xylulose 5-phosphate reductoisomerase from Vibrio vulnificus (strain YJ016).